Reading from the N-terminus, the 200-residue chain is uncharacterized protein (200 aa).

Disordered regions lie at residues 1-27 (MTDT…EAET), 42-79 (IPKE…STNA), and 169-200 (HGRA…EHGR). Residues 187–200 (RQMEKTGAGREHGR) show a composition bias toward basic and acidic residues.

This is an uncharacterized protein from Shigella flexneri.